The chain runs to 311 residues: Homoserine kinase (311 aa).

Position 88 to 98 (88 to 98 (PEGLGLGSSGA)) interacts with ATP.

The protein belongs to the GHMP kinase family. Homoserine kinase subfamily.

It localises to the cytoplasm. It carries out the reaction L-homoserine + ATP = O-phospho-L-homoserine + ADP + H(+). It participates in amino-acid biosynthesis; L-threonine biosynthesis; L-threonine from L-aspartate: step 4/5. Functionally, catalyzes the ATP-dependent phosphorylation of L-homoserine to L-homoserine phosphate. This is Homoserine kinase from Saccharolobus solfataricus (strain ATCC 35092 / DSM 1617 / JCM 11322 / P2) (Sulfolobus solfataricus).